Reading from the N-terminus, the 96-residue chain is CRISPR-associated endoribonuclease Cas2 (96 aa).

A Mg(2+)-binding site is contributed by Asp-8.

The protein belongs to the CRISPR-associated endoribonuclease Cas2 protein family. As to quaternary structure, homodimer, forms a heterotetramer with a Cas1 homodimer. Requires Mg(2+) as cofactor.

In terms of biological role, CRISPR (clustered regularly interspaced short palindromic repeat), is an adaptive immune system that provides protection against mobile genetic elements (viruses, transposable elements and conjugative plasmids). CRISPR clusters contain sequences complementary to antecedent mobile elements and target invading nucleic acids. CRISPR clusters are transcribed and processed into CRISPR RNA (crRNA). Functions as a ssRNA-specific endoribonuclease. Involved in the integration of spacer DNA into the CRISPR cassette. This Chlorobaculum tepidum (strain ATCC 49652 / DSM 12025 / NBRC 103806 / TLS) (Chlorobium tepidum) protein is CRISPR-associated endoribonuclease Cas2.